Here is a 1252-residue protein sequence, read N- to C-terminus: DNA-directed RNA polymerase subunit beta (1252 aa).

The protein belongs to the RNA polymerase beta chain family. As to quaternary structure, the RNAP catalytic core consists of 2 alpha, 1 beta, 1 beta' and 1 omega subunit. When a sigma factor is associated with the core the holoenzyme is formed, which can initiate transcription.

It carries out the reaction RNA(n) + a ribonucleoside 5'-triphosphate = RNA(n+1) + diphosphate. Its function is as follows. DNA-dependent RNA polymerase catalyzes the transcription of DNA into RNA using the four ribonucleoside triphosphates as substrates. The chain is DNA-directed RNA polymerase subunit beta from Chlamydia felis (strain Fe/C-56) (Chlamydophila felis).